We begin with the raw amino-acid sequence, 365 residues long: Succinyl-diaminopimelate desuccinylase (365 aa).

Residue H64 coordinates Zn(2+). D66 is an active-site residue. Zn(2+) is bound at residue D95. The active-site Proton acceptor is E125. Positions 126, 154, and 339 each coordinate Zn(2+).

It belongs to the peptidase M20A family. DapE subfamily. As to quaternary structure, homodimer. Zn(2+) serves as cofactor. The cofactor is Co(2+).

The enzyme catalyses N-succinyl-(2S,6S)-2,6-diaminopimelate + H2O = (2S,6S)-2,6-diaminopimelate + succinate. The protein operates within amino-acid biosynthesis; L-lysine biosynthesis via DAP pathway; LL-2,6-diaminopimelate from (S)-tetrahydrodipicolinate (succinylase route): step 3/3. In terms of biological role, catalyzes the hydrolysis of N-succinyl-L,L-diaminopimelic acid (SDAP), forming succinate and LL-2,6-diaminopimelate (DAP), an intermediate involved in the bacterial biosynthesis of lysine and meso-diaminopimelic acid, an essential component of bacterial cell walls. This Sulfurimonas denitrificans (strain ATCC 33889 / DSM 1251) (Thiomicrospira denitrificans (strain ATCC 33889 / DSM 1251)) protein is Succinyl-diaminopimelate desuccinylase.